A 304-amino-acid chain; its full sequence is MTQKIKCALIGPGNIGTDLLAKLKRSPFLEPVWMVGIDPESDGLRRAAEMGLKVTAEGVDGLLPHVLADGVQIAFDATSAYVHAENSRKLNALGVMMIDLTPAAIGPFCVPPVNLKELVGRKEMNVNMVTCGGQATIPMVAAISRVQKVKYGEIVATISSKSAGPGTRKNIDEFTRTTSGAIEKVGGAEKGKAIIIINPAEPPLMMRDTVHCLTEGTPDQAKITESIHAMIKEVQKYVPGYRLVNGPVFDGNRVSVFLEVEGLGDYLPKYAGNLDIMTAAAARTAEMFAEEIISGVLKLEPVVA.

Cys-131 functions as the Acyl-thioester intermediate in the catalytic mechanism. NAD(+) contacts are provided by residues 162–170 and Asn-273; that span reads SAGPGTRKN.

Belongs to the acetaldehyde dehydrogenase family.

It catalyses the reaction acetaldehyde + NAD(+) + CoA = acetyl-CoA + NADH + H(+). This Dechloromonas aromatica (strain RCB) protein is Acetaldehyde dehydrogenase 1.